Reading from the N-terminus, the 704-residue chain is MARTTPIARYRNIGISAHIDAGKTTTTERILFYTGVNHKIGEVHDGAATMDWMEQEQERGITITSAATTAFWSGMAKQYEPHRVNIIDTPGHVDFTIEVERSMRVLDGAVMVYCAVGGVQPQSETVWRQANKYKVPRIAFVNKMDRMGANFLKVVGQIKARLGANPVPLQLAIGAEEGFTGVVDLVKMKAINWNDADQGVTFTYEDIPAEMQELADEWHQNLIESAAEASEELMEKYLGGEELTEEEIKKALRQRVLNNEVILVTCGSAFKNKGVQAMLDAVIDYLPAPTDVPAINGLLDDGKDTPAERHANDDEPFSALAFKIATDPFVGNLTFFRVYSGVVNSGDTVLNPVKSARERFGRIVQMHANKREEIKEVRAGDIAAAIGLKDVTTGDTLCDPNNVIILERMEFPEPVISIAVEPKTKADQEKMGLALGRLAKEDPSFRVWTDEESNQTIIAGMGELHLDIIVDRMKREFNVEANVGKPQVAYREAIRSKVTDIEGKHAKQSGGRGQYGHVVIDMYPLEPGSNPKGYEFVNDIKGGVIPGEYIPAVDKGIQEQLKAGPLAGYPVVDLGVRLHFGSYHDVDSSELAFKLAASIAFKDGFKKAKPVLLEPIMKVEVETPEENTGDVIGDLSRRRGMLRGQESNVTGVVIHAEVPLSEMFGYATQLRSLTKGRASYSMEFLKYDDAPNNVAQAVIEARGK.

Positions 8 to 290 constitute a tr-type G domain; sequence ARYRNIGISA…AVIDYLPAPT (283 aa). GTP is bound by residues 17-24, 88-92, and 142-145; these read AHIDAGKT, DTPGH, and NKMD.

Belongs to the TRAFAC class translation factor GTPase superfamily. Classic translation factor GTPase family. EF-G/EF-2 subfamily.

The protein resides in the cytoplasm. Its function is as follows. Catalyzes the GTP-dependent ribosomal translocation step during translation elongation. During this step, the ribosome changes from the pre-translocational (PRE) to the post-translocational (POST) state as the newly formed A-site-bound peptidyl-tRNA and P-site-bound deacylated tRNA move to the P and E sites, respectively. Catalyzes the coordinated movement of the two tRNA molecules, the mRNA and conformational changes in the ribosome. In Pectobacterium atrosepticum (strain SCRI 1043 / ATCC BAA-672) (Erwinia carotovora subsp. atroseptica), this protein is Elongation factor G.